The primary structure comprises 351 residues: MRKIIHVDMDCFFAAVEMRDNPALRDIPIAIGGSRERRGVISTANYPARKFGVRSAMPTGMALKLCPHLTLLPGRFDAYKEASNHIREIFSRYTSRIEPLSLDEAYLDVTDSVHCHGSATLIAQEIRQTIFSELQLTASAGVAPVKFLAKIASDMNKPNGQFVITPAEVPAFLQTLPLAKIPGVGKVSAAKLEAMGLRTCGDVQKCDLVMLLKRFGKFGRILWERSQGIDERDVNSERLRKSVGVERTMAEDIHHWSECEAIIERLYPELERRLAKVKPDLLIARQGVKLKFDDFQQTTQEHVWPRLNKADLIATARKTWDERRGGRGVRLVGLHVTLLDPQMERQLVLGL.

Residues 4 to 185 (IIHVDMDCFF…LPLAKIPGVG (182 aa)) enclose the UmuC domain. Positions 8 and 103 each coordinate Mg(2+). Glu-104 is a catalytic residue.

This sequence belongs to the DNA polymerase type-Y family. Monomer. Mg(2+) is required as a cofactor.

The protein localises to the cytoplasm. The catalysed reaction is DNA(n) + a 2'-deoxyribonucleoside 5'-triphosphate = DNA(n+1) + diphosphate. Poorly processive, error-prone DNA polymerase involved in untargeted mutagenesis. Copies undamaged DNA at stalled replication forks, which arise in vivo from mismatched or misaligned primer ends. These misaligned primers can be extended by PolIV. Exhibits no 3'-5' exonuclease (proofreading) activity. May be involved in translesional synthesis, in conjunction with the beta clamp from PolIII. The protein is DNA polymerase IV of Escherichia coli O139:H28 (strain E24377A / ETEC).